We begin with the raw amino-acid sequence, 102 residues long: MNKIIKESTNFSRYLRTGGVLNSLRTTSKFVYINNNSYLTHGGFDGNVATIFNISEFNYINSSAKGSLLTYKSITFFCPRYFKKRPLGRHAKGKGKSDEKIL.

This is an uncharacterized protein from Saccharomyces cerevisiae (strain ATCC 204508 / S288c) (Baker's yeast).